We begin with the raw amino-acid sequence, 369 residues long: MTGAAEKVNLLGMPKAKLEAFFETLGEKRFRAQQVLQWMHQRGVDDFDQMTNMSKSLREQLKEVAEIRGPEVVYDETSKDGTRKWVMRMDNGNSVETVLIPDGERGTLCVSSQIGCSLDCTFCSTGKRGFNRNLTAAEIIGQVWVARRAFMPFDPNDRPITNVVMMGMGEPLLNFENVVDAMNLMMEDLAYGISKRRVTLSTSGVVPALDRLGEVTDVSLAISLHAPNDELRNQLVPLNKKYPIAELLAATRRYLSRLPDKRKATIEYTVIEGVNDQPEHARELVVLLKGLPCKINLIPFNPFPESDFRRPSMNATRRFQTVLNEAGYVTTIRTTRGDDIDAACGQLVGRVEDRTRRSQRYIAVQQVNP.

Glu96 serves as the catalytic Proton acceptor. The Radical SAM core domain maps to 102 to 338; it reads DGERGTLCVS…VTTIRTTRGD (237 aa). A disulfide bridge connects residues Cys109 and Cys344. [4Fe-4S] cluster-binding residues include Cys116, Cys120, and Cys123. Residues 169-170, Ser201, 223-225, and Asn301 contribute to the S-adenosyl-L-methionine site; these read GE and SLH. The active-site S-methylcysteine intermediate is Cys344.

Belongs to the radical SAM superfamily. RlmN family. [4Fe-4S] cluster serves as cofactor.

It is found in the cytoplasm. The catalysed reaction is adenosine(2503) in 23S rRNA + 2 reduced [2Fe-2S]-[ferredoxin] + 2 S-adenosyl-L-methionine = 2-methyladenosine(2503) in 23S rRNA + 5'-deoxyadenosine + L-methionine + 2 oxidized [2Fe-2S]-[ferredoxin] + S-adenosyl-L-homocysteine. It carries out the reaction adenosine(37) in tRNA + 2 reduced [2Fe-2S]-[ferredoxin] + 2 S-adenosyl-L-methionine = 2-methyladenosine(37) in tRNA + 5'-deoxyadenosine + L-methionine + 2 oxidized [2Fe-2S]-[ferredoxin] + S-adenosyl-L-homocysteine. In terms of biological role, specifically methylates position 2 of adenine 2503 in 23S rRNA and position 2 of adenine 37 in tRNAs. m2A2503 modification seems to play a crucial role in the proofreading step occurring at the peptidyl transferase center and thus would serve to optimize ribosomal fidelity. The sequence is that of Dual-specificity RNA methyltransferase RlmN from Marinobacter nauticus (strain ATCC 700491 / DSM 11845 / VT8) (Marinobacter aquaeolei).